Consider the following 350-residue polypeptide: Glyceraldehyde-3-phosphate dehydrogenase (350 aa).

NAD(+) contacts are provided by residues 13–14 and Gly118; that span reads TI. 147-149 is a D-glyceraldehyde 3-phosphate binding site; the sequence is SCN. Cys148 serves as the catalytic Nucleophile. Arg176 lines the NAD(+) pocket. 202-203 serves as a coordination point for D-glyceraldehyde 3-phosphate; it reads HG. NAD(+) is bound at residue Gln309. A disordered region spans residues 327-350; sequence LEEDPEASMDATDSALGVLNSPPL.

This sequence belongs to the glyceraldehyde-3-phosphate dehydrogenase family. In terms of assembly, homotetramer.

The protein localises to the cytoplasm. The enzyme catalyses D-glyceraldehyde 3-phosphate + phosphate + NADP(+) = (2R)-3-phospho-glyceroyl phosphate + NADPH + H(+). The catalysed reaction is D-glyceraldehyde 3-phosphate + phosphate + NAD(+) = (2R)-3-phospho-glyceroyl phosphate + NADH + H(+). Its pathway is carbohydrate degradation; glycolysis; pyruvate from D-glyceraldehyde 3-phosphate: step 1/5. This chain is Glyceraldehyde-3-phosphate dehydrogenase, found in Methanopyrus kandleri (strain AV19 / DSM 6324 / JCM 9639 / NBRC 100938).